A 212-amino-acid polypeptide reads, in one-letter code: Adenylate kinase (212 aa).

Residue 14–19 (GSGKGT) participates in ATP binding. Positions 34 to 63 (STGDLFRKKISEDSQFAAQIQNYLSSGSYV) are NMP. AMP contacts are provided by residues threonine 35, arginine 40, 61 to 63 (SYV), 89 to 92 (GYPR), and glutamine 96. Positions 126–163 (QRLFCQKCQKSYNLLLAKPKNELKCDLDSTDLITRNDD) are LID. Arginine 127 contributes to the ATP binding site. 2 residues coordinate Zn(2+): cysteine 130 and cysteine 133. 136-137 (SY) contributes to the ATP binding site. 2 residues coordinate Zn(2+): cysteine 150 and aspartate 153. Positions 160 and 171 each coordinate AMP. Residue glutamine 199 participates in ATP binding.

It belongs to the adenylate kinase family. As to quaternary structure, monomer.

It localises to the cytoplasm. It carries out the reaction AMP + ATP = 2 ADP. Its pathway is purine metabolism; AMP biosynthesis via salvage pathway; AMP from ADP: step 1/1. Its function is as follows. Catalyzes the reversible transfer of the terminal phosphate group between ATP and AMP. Plays an important role in cellular energy homeostasis and in adenine nucleotide metabolism. This Mesomycoplasma hyopneumoniae (strain J / ATCC 25934 / NCTC 10110) (Mycoplasma hyopneumoniae) protein is Adenylate kinase.